The following is an 827-amino-acid chain: SH3-containing GRB2-like protein 3-interacting protein 1 (827 aa).

3 disordered regions span residues 1 to 115 (MMEG…ESHK), 142 to 205 (SIGN…GPPL), and 223 to 278 (IWGS…QAAT). 2 stretches are compositionally biased toward basic and acidic residues: residues 16–32 (RKKEKDTDSTGSPDRDG) and 40–54 (PPYHSKAECAREGGK). Phosphoserine occurs at positions 78, 104, 105, 107, 149, 151, 156, and 169. Thr-180 and Thr-182 each carry phosphothreonine. Phosphoserine is present on Ser-236. The segment covering 245-260 (TGTPPPLPPKAVPATP) has biased composition (pro residues). Phosphothreonine occurs at positions 247 and 259. 6 positions are modified to phosphoserine: Ser-265, Ser-287, Ser-289, Ser-300, Ser-316, and Ser-319. Positions 265-276 (SPLTVATGNDQA) are enriched in polar residues. Residues 314-333 (HFSDASPEHVTPELTPREKV) show a composition bias toward basic and acidic residues. The disordered stretch occupies residues 314-523 (HFSDASPEHV…LSAATTPTVE (210 aa)). A phosphothreonine mark is found at Thr-324, Thr-328, and Thr-335. Over residues 336-345 (PPAASDIPAD) the composition is skewed to low complexity. Pro residues predominate over residues 346 to 369 (SPAPGPPGPPGSAGPPGPPGPRHV). Ser-371 carries the phosphoserine modification. Residues 377-392 (EVQKKVAEQTFIKDDY) show a composition bias toward basic and acidic residues. Ser-398 bears the Phosphoserine mark. The residue at position 409 (Thr-409) is a Phosphothreonine. Low complexity predominate over residues 436 to 455 (ASGASSPARPATPLVPCSST). Over residues 456–474 (TPPPPPPRPPSRPKLPPGK) the composition is skewed to pro residues. Low complexity-rich tracts occupy residues 481 to 491 (SRPFSPPIHSS) and 498 to 521 (PLARAESTSSISSTNSLSAATTPT). Ser-485 carries the post-translational modification Phosphoserine. The region spanning 558 to 826 (TLPVAAAFTE…RFAAGKYLAD (269 aa)) is the MHD domain. Interaction with DPF motifs-containing proteins stretches follow at residues 560 to 566 (PVAAAFT), 592 to 594 (SFP), 666 to 669 (TYYN), and 812 to 817 (SLIKKR). The necessary and sufficient to mediate interaction with CANX stretch occupies residues 648 to 827 (MPNLMTHLKK…FAAGKYLADN (180 aa)).

In terms of assembly, interacts with proteins essential or regulating the formation of functional clathrin-coated pits. Interacts with CANX. Interacts with AP2A1. Interacts with EPS15. Interacts with SH3GL3. Interacts with AMPH. Interacts with ITSN1 (via SH3 domains). Interacts with and REPS1. As to expression, specifically expressed in brain (at protein level).

It localises to the membrane. Its subcellular location is the clathrin-coated pit. In terms of biological role, may function in clathrin-mediated endocytosis. Has both a membrane binding/tubulating activity and the ability to recruit proteins essential to the formation of functional clathrin-coated pits. Has a preference for membranes enriched in phosphatidylserine and phosphoinositides and is required for the endocytosis of the transferrin receptor. May also bind tubulin. May play a role in the regulation of energy homeostasis. The polypeptide is SH3-containing GRB2-like protein 3-interacting protein 1 (Sgip1) (Rattus norvegicus (Rat)).